The following is a 230-amino-acid chain: Protein-L-isoaspartate O-methyltransferase 1 (230 aa).

Ser65 is a catalytic residue.

Belongs to the methyltransferase superfamily. L-isoaspartyl/D-aspartyl protein methyltransferase family. As to quaternary structure, monomer. In terms of tissue distribution, expressed in roots, rosette leaves, stems, cauline leaves, flowers and developing seeds.

It is found in the cytoplasm. The enzyme catalyses [protein]-L-isoaspartate + S-adenosyl-L-methionine = [protein]-L-isoaspartate alpha-methyl ester + S-adenosyl-L-homocysteine. Catalyzes the methyl esterification of L-isoaspartyl residues in peptides and proteins that result from spontaneous decomposition of normal L-aspartyl and L-asparaginyl residues. It plays a role in the repair and/or degradation of damaged proteins. Contributes to seed longevity and germination vigor by limiting the abnormal accumulation of the L-isoaspartyl residues in seed proteins. In Arabidopsis thaliana (Mouse-ear cress), this protein is Protein-L-isoaspartate O-methyltransferase 1 (PIMT1).